A 780-amino-acid polypeptide reads, in one-letter code: ATP-dependent 6-phosphofructokinase, liver type (780 aa).

A2 bears the N-acetylalanine mark. The interval 2–390 is N-terminal catalytic PFK domain 1; it reads ATVDLEKLRM…NWKIYKLLAH (389 aa). ATP contacts are provided by residues G25, 88–89, and 118–121; these read RC and GDGS. D119 is a binding site for Mg(2+). Residues 164–166, R201, 208–210, E264, R292, and 298–301 contribute to the substrate site; these read SID, MGR, and HVQR. D166 (proton acceptor) is an active-site residue. S377 carries the phosphoserine modification. Positions 391-400 are interdomain linker; sequence QKVSKEKSNF. Residues 401-780 are C-terminal regulatory PFK domain 2; that stretch reads SLAILNVGAP…RRTLSIDKGF (380 aa). Residues R470, 527-531, R565, 572-574, and E628 contribute to the beta-D-fructose 2,6-bisphosphate site; these read TISNN and MGG. An O-linked (GlcNAc) serine glycan is attached at S529. Residue Y640 is modified to Phosphotyrosine. Residues R654, 660-663, and R734 contribute to the beta-D-fructose 2,6-bisphosphate site; that span reads HLQQ. S775 carries the phosphoserine modification.

This sequence belongs to the phosphofructokinase type A (PFKA) family. ATP-dependent PFK group I subfamily. Eukaryotic two domain clade 'E' sub-subfamily. In terms of assembly, homo- and heterotetramers. Phosphofructokinase (PFK) enzyme functions as a tetramer composed of different combinations of 3 types of subunits, called PFKM (M), PFKL (L) and PFKP (P). The composition of the PFK tetramer differs according to the tissue type it is present in. The kinetic and regulatory properties of the tetrameric enzyme are dependent on the subunit composition, hence can vary across tissues. Mg(2+) is required as a cofactor. Post-translationally, glcNAcylation at Ser-529 by OGT decreases enzyme activity, leading to redirect glucose flux through the oxidative pentose phosphate pathway. Glycosylation is stimulated by both hypoxia and glucose deprivation.

Its subcellular location is the cytoplasm. It carries out the reaction beta-D-fructose 6-phosphate + ATP = beta-D-fructose 1,6-bisphosphate + ADP + H(+). It participates in carbohydrate degradation; glycolysis; D-glyceraldehyde 3-phosphate and glycerone phosphate from D-glucose: step 3/4. With respect to regulation, allosterically activated by ADP, AMP, or fructose 2,6-bisphosphate, and allosterically inhibited by ATP or citrate. GlcNAcylation by OGT overcomes allosteric regulation. In terms of biological role, catalyzes the phosphorylation of D-fructose 6-phosphate to fructose 1,6-bisphosphate by ATP, the first committing step of glycolysis. Negatively regulates the phagocyte oxidative burst in response to bacterial infection by controlling cellular NADPH biosynthesis and NADPH oxidase-derived reactive oxygen species. Upon macrophage activation, drives the metabolic switch toward glycolysis, thus preventing glucose turnover that produces NADPH via pentose phosphate pathway. This is ATP-dependent 6-phosphofructokinase, liver type from Mus musculus (Mouse).